A 421-amino-acid chain; its full sequence is Functional amyloid transporter FapF (421 aa).

The N-terminal stretch at 1–24 is a signal peptide; sequence MTQTLSLRAVLCATTLVSPFLAQA. Residues 23-64 adopt a coiled-coil conformation; sequence QAATESEVEALKKELLELRQRYEAQQNALMVLEQRVRQVEAQ.

The protein belongs to the amyloid transporter (TC 9.B.153) family.

It is found in the secreted. It localises to the cell surface. The protein localises to the cell outer membrane. Functionally, transports fibril components across the outer membrane. Upon overexpression of the endogenous six-gene locus (fapA-fapF), cells form large clumps during liquid growth, make large amounts of biofilm and produce amyloid fibrils. The chain is Functional amyloid transporter FapF from Pseudomonas aeruginosa (strain ATCC 15692 / DSM 22644 / CIP 104116 / JCM 14847 / LMG 12228 / 1C / PRS 101 / PAO1).